Consider the following 63-residue polypeptide: Large ribosomal subunit protein bL28 (63 aa).

It belongs to the bacterial ribosomal protein bL28 family.

This is Large ribosomal subunit protein bL28 from Clostridium acetobutylicum (strain ATCC 824 / DSM 792 / JCM 1419 / IAM 19013 / LMG 5710 / NBRC 13948 / NRRL B-527 / VKM B-1787 / 2291 / W).